The sequence spans 298 residues: uncharacterized protein (298 aa).

A run of 10 helical transmembrane segments spans residues 5 to 25 (ILFGVSMILLANLCFGIMSAF), 36 to 56 (MENVFYRSITMTLLLLLIYPF), 76 to 96 (VVVGGLAMLAFFYNIEKISLA), 97 to 117 (TATAFSQCAPIYTVLLSPLLL), 124 to 144 (STLISACIGIVGVVLISDPSV), 147 to 167 (VGPVEIFMGILSGIFVSLAYI), 181 to 201 (VILAFAFGMSLLGLVGMFIDI), 216 to 236 (ILWISLIGISGTLGQYFLTYA), 244 to 264 (IIAPIEYTRIVWGLLFGLYLG), and 272 to 292 (SSLGVALILCSGLLIALPALL). The EamA 1 domain occupies 17–141 (LCFGIMSAFV…GIVGVVLISD (125 aa)). In terms of domain architecture, EamA 2 spans 183–288 (LAFAFGMSLL…ILCSGLLIAL (106 aa)).

Belongs to the EamA transporter family.

The protein resides in the cell membrane. This is an uncharacterized protein from Helicobacter pylori (strain ATCC 700392 / 26695) (Campylobacter pylori).